A 216-amino-acid chain; its full sequence is MOB kinase activator 3B (216 aa).

Zn(2+) is bound by residues Cys-82, Cys-87, His-164, and His-169.

This sequence belongs to the MOB1/phocein family.

In terms of biological role, modulates LATS1 expression in the Hippo signaling pathway which plays a pivotal role in organ size control and tumor suppression by restricting proliferation and promoting apoptosis. This is MOB kinase activator 3B from Homo sapiens (Human).